The following is a 297-amino-acid chain: Small ribosomal subunit protein uS2 (297 aa).

Residues 263–289 are compositionally biased toward low complexity; it reads AAPTSWEADGGDWAASSAAPAGESWAE. A disordered region spans residues 263-297; sequence AAPTSWEADGGDWAASSAAPAGESWAETQPAEAKW.

Belongs to the universal ribosomal protein uS2 family. As to quaternary structure, component of the small ribosomal subunit. Mature ribosomes consist of a small (40S) and a large (60S) subunit. The 40S subunit contains about 33 different proteins and 1 molecule of RNA (18S). The 60S subunit contains about 49 different proteins and 3 molecules of RNA (25S, 5.8S and 5S). Interacts with rps21.

The protein resides in the cytoplasm. Its function is as follows. Required for the assembly and/or stability of the 40S ribosomal subunit. Required for the processing of the 20S rRNA-precursor to mature 18S rRNA in a late step of the maturation of 40S ribosomal subunits. This chain is Small ribosomal subunit protein uS2 (rps0), found in Neosartorya fischeri (strain ATCC 1020 / DSM 3700 / CBS 544.65 / FGSC A1164 / JCM 1740 / NRRL 181 / WB 181) (Aspergillus fischerianus).